Consider the following 514-residue polypeptide: Xylose import ATP-binding protein XylG (514 aa).

ABC transporter domains follow at residues 7-246 and 263-508; these read FEMR…VGRE and LEAR…IHAE. 39–46 contacts ATP; sequence GENGAGKS.

The protein belongs to the ABC transporter superfamily. Xylose importer (TC 3.A.1.2.4) family. The complex is composed of two ATP-binding proteins (XylG), two transmembrane proteins (XylH) and a solute-binding protein (XylF).

Its subcellular location is the cell inner membrane. It carries out the reaction D-xylose(out) + ATP + H2O = D-xylose(in) + ADP + phosphate + H(+). In terms of biological role, part of the ABC transporter complex XylFGH involved in xylose import. Responsible for energy coupling to the transport system. The protein is Xylose import ATP-binding protein XylG of Ralstonia nicotianae (strain ATCC BAA-1114 / GMI1000) (Ralstonia solanacearum).